The following is a 465-amino-acid chain: MDNHSSVPWASAASVTCLSLDAKCHSSSSKSAASSISASPETQTMRHIAHTQRCLSRLTSLVALLLIVLPMMFSPAHSCGPGRGLGRHRARNLYPLVLKQTIPNLSEYTNSASGPLEGVIRRDSPKFKDLVPNYNRDILFRDEEGTGADRLMSKRCKEKLNVLAYSVMNEWPGIRLLVTESWDEDYHHGQESLHYEGRAVTIATSDRDQSKYGMLARLAVEAGFDWVSYVSRRHIYCSVKSDSSISSHVHGCFTPESTALLESGVRKPLGELSIGDRVLSMTANGQAVYSEVILFMDRNLEQMQNFVQLHTDGGAVLTVTPAHLVSVWQPESQKLTFVFADRIEEKNQVLVRDVETGELRPQRVVKVGSVRSKGVVAPLTREGTIVVNSVAASCYAVINSQSLAHWGLAPMRLLSTLEAWLPAKEQLHSSPKVVSSAQQQNGIHWYANALYKVKDYVLPQSWRHD.

C79 is lipidated: N-palmitoyl cysteine. Ca(2+) is bound by residues E143, E144, D149, T179, E180, D183, and D185. A lipid anchor (Cholesterol glycine ester) is attached at G251.

This sequence belongs to the hedgehog family. As to quaternary structure, interacts with shf. The C-terminal part of the hedgehog protein precursor displays an autoproteolysis activity that results in the cleavage of the full-length protein into two parts (N-product and C-product). In addition, the C-terminal part displays a cholesterol transferase activity that results by the covalent attachment of a cholesterol moiety to the C-terminal of the newly generated N-product. The N-product is the active species in both local and long-range signaling, whereas the C-product has no signaling activity. Post-translationally, cholesterylation is required for N-product targeting to lipid rafts and multimerization. In terms of processing, N-palmitoylation by Rasp of the hedgehog N-product, within the secretory pathway, is required for the embryonic and larval patterning activities of the hedgehog signal.

The protein localises to the nucleus. It localises to the cytoplasm. Its subcellular location is the cell membrane. The catalysed reaction is glycyl-L-cysteinyl-[protein] + cholesterol + H(+) = [protein]-C-terminal glycyl cholesterol ester + N-terminal L-cysteinyl-[protein]. Functionally, the C-terminal part of the hedgehog protein precursor displays an autoproteolysis activity that results in the cleavage of the full-length protein into two parts (N-product and C-product). In addition, the C-terminal part displays a cholesterol transferase activity that results by the covalent attachment of a cholesterol moiety to the C-terminal of the newly generated N-product. Once cleaved, the C-product has no signaling activity and diffuses from the cell. Its function is as follows. The dually lipidated hedgehog protein N-product is a morphogen which is essential for a variety of patterning events during development. Establishes the anterior-posterior axis of the embryonic segments and patterns the larval imaginal disks. Binds to the patched (ptc) receptor, which functions in association with smoothened (smo), to activate the transcription of target genes wingless (wg), decapentaplegic (dpp) and ptc. In the absence of hh, ptc represses the constitutive signaling activity of smo through fused (fu). Essential component of a signaling pathway which regulates the Duox-dependent gut immune response to bacterial uracil; required to activate Cad99C-dependent endosome formation, norpA-dependent Ca2+ mobilization and p38 MAPK, which are essential steps in the Duox-dependent production of reactive oxygen species (ROS) in response to intestinal bacterial infection. During photoreceptor differentiation, it up-regulates transcription of Ubr3, which in turn promotes the hh-signaling pathway by mediating the ubiquitination and degradation of cos. The sequence is that of Protein hedgehog from Drosophila sechellia (Fruit fly).